Consider the following 196-residue polypeptide: Putative AAA family ATPase L572 (196 aa).

32–39 is an ATP binding site; that stretch reads NAVNCKET.

The protein belongs to the AAA ATPase family.

In Acanthamoeba polyphaga mimivirus (APMV), this protein is Putative AAA family ATPase L572.